The chain runs to 80 residues: Acyl carrier protein (80 aa).

A Carrier domain is found at 4-79; it reads EAILEKVRSI…DAVKYIEEKQ (76 aa). The residue at position 39 (Ser39) is an O-(pantetheine 4'-phosphoryl)serine.

It belongs to the acyl carrier protein (ACP) family. 4'-phosphopantetheine is transferred from CoA to a specific serine of apo-ACP by AcpS. This modification is essential for activity because fatty acids are bound in thioester linkage to the sulfhydryl of the prosthetic group.

It is found in the cytoplasm. It participates in lipid metabolism; fatty acid biosynthesis. Carrier of the growing fatty acid chain in fatty acid biosynthesis. The polypeptide is Acyl carrier protein (Prochlorococcus marinus (strain NATL1A)).